We begin with the raw amino-acid sequence, 512 residues long: Methionine--tRNA ligase (512 aa).

A 'HIGH' region motif is present at residues 11 to 21 (YYASGKPHIGH). Positions 126, 129, 143, and 147 each coordinate Zn(2+). The 'KMSKS' region signature appears at 301 to 305 (KMSKS). K304 is a binding site for ATP.

This sequence belongs to the class-I aminoacyl-tRNA synthetase family. MetG type 2A subfamily. In terms of assembly, monomer. Requires Zn(2+) as cofactor.

It is found in the cytoplasm. The enzyme catalyses tRNA(Met) + L-methionine + ATP = L-methionyl-tRNA(Met) + AMP + diphosphate. Functionally, is required not only for elongation of protein synthesis but also for the initiation of all mRNA translation through initiator tRNA(fMet) aminoacylation. The polypeptide is Methionine--tRNA ligase (metG) (Mycoplasma pneumoniae (strain ATCC 29342 / M129 / Subtype 1) (Mycoplasmoides pneumoniae)).